A 627-amino-acid chain; its full sequence is MEKMSYTFSQQYEEKIRPCIDTIDNLRSLGVEKDLALPAIAVIGDQSSGKSSVLEALSGVPLPRGSGIVTRCPLELKMIRSKEDEKWHGRISYQNHEEDFDDPAEVEKKIREAQDEMAGAGVGISEELISLQITSANVPDLTLIDLPGIARVAVKGQPENIGDQIKRLIRMFITKQETINLVVVPCNVDIATTEALQMAQAEDPEGERTLGILTKPDLVDKGTEGTVVDIVHNEVIHLTKGYMIVRCRGQKEIMDQVTLNEATETESAFFKDHPHFRKLYEEGFATIPKLAEKLTIELVHHIQRSLPRLEDQIQTKLAETQKELEAYGDGPPSDPAERLSFFIDKVTAFTCDTLNLTTGEEVKSASKLLIFPELRQEFAYWNSFLDSSGYSFKLKIEEEVDNYEVKYRGRELPGFINYKTFEGLVREQMKLLEEPALKMLKNVSDMVKKKFIQLAQSSFTGFPILLKIAKTKIEAIKQDKECLAESMLRTQFKMELIVYTQDGTYSQSLLRSKEKREEDEEDTENFDCMTVGIATSNHATLSEMKLHLESYYMIASQRLADQIPMVIRYLLLQEAALELQRSMLQLLQDKDGVDDMLKEDFDIGQKRENLLSRQKRLMKAQNLLATY.

The Dynamin-type G domain maps to 34–307 (DLALPAIAVI…LVHHIQRSLP (274 aa)). The G1 motif stretch occupies residues 44 to 51 (GDQSSGKS). GTP is bound at residue 44–51 (GDQSSGKS). Residues 69–71 (VTR) form a G2 motif region. The G3 motif stretch occupies residues 145 to 148 (DLPG). Residues 145–149 (DLPGI) and 214–217 (TKPD) contribute to the GTP site. The tract at residues 214-217 (TKPD) is G4 motif. Positions 246–249 (RCRG) are G5 motif. The region spanning 541–627 (LSEMKLHLES…MKAQNLLATY (87 aa)) is the GED domain.

It belongs to the TRAFAC class dynamin-like GTPase superfamily. Dynamin/Fzo/YdjA family.

It is found in the cytoplasm. The protein is Interferon-induced GTP-binding protein MxB (mxb) of Danio rerio (Zebrafish).